The primary structure comprises 275 residues: Large ribosomal subunit protein uL2 (275 aa).

The disordered stretch occupies residues 223 to 275 (VAMNPIDHPHGGGEGRTGEAREPVSPWGTPSKGYKTRRNKRTNNMIVQRRKRK). Residues 229–244 (DHPHGGGEGRTGEARE) show a composition bias toward basic and acidic residues.

Belongs to the universal ribosomal protein uL2 family. Part of the 50S ribosomal subunit. Forms a bridge to the 30S subunit in the 70S ribosome.

Its function is as follows. One of the primary rRNA binding proteins. Required for association of the 30S and 50S subunits to form the 70S ribosome, for tRNA binding and peptide bond formation. It has been suggested to have peptidyltransferase activity; this is somewhat controversial. Makes several contacts with the 16S rRNA in the 70S ribosome. The chain is Large ribosomal subunit protein uL2 from Bordetella avium (strain 197N).